Consider the following 164-residue polypeptide: Peptide deformylase (164 aa).

Residues Cys87 and His129 each contribute to the Fe cation site. Glu130 is a catalytic residue. A Fe cation-binding site is contributed by His133.

It belongs to the polypeptide deformylase family. Requires Fe(2+) as cofactor.

The enzyme catalyses N-terminal N-formyl-L-methionyl-[peptide] + H2O = N-terminal L-methionyl-[peptide] + formate. Its function is as follows. Removes the formyl group from the N-terminal Met of newly synthesized proteins. Requires at least a dipeptide for an efficient rate of reaction. N-terminal L-methionine is a prerequisite for activity but the enzyme has broad specificity at other positions. This chain is Peptide deformylase, found in Thermotoga petrophila (strain ATCC BAA-488 / DSM 13995 / JCM 10881 / RKU-1).